The primary structure comprises 379 residues: ATP-sensitive inward rectifier potassium channel 10 (379 aa).

Residues 1-61 lie on the Cytoplasmic side of the membrane; sequence MTSVAKVYYS…LKDLWTTFID (61 aa). 1,2-dioctanoyl-sn-glycero-3-phospho-(1D-myo-inositol-4,5-bisphosphate) is bound at residue arginine 36. Residues 62-88 traverse the membrane as a helical segment; sequence MQWRYKLLLFSATFAGTWFLFGVVWYL. The Extracellular portion of the chain corresponds to 89–114; sequence VAVAHGDLLELGPPANHTPCVVQVHT. Cysteine 108 and cysteine 140 are oxidised to a cystine. Residues 115-131 constitute an intramembrane region (discontinuously helical; Pore-forming); sequence LTGAFLFSLESQTTIGY. The Selectivity filter signature appears at 128 to 133; it reads TIGYGF. Residues 132–140 lie on the Extracellular side of the membrane; sequence GFRYISEEC. A helical membrane pass occupies residues 141-166; it reads PLAIVLLIAQLVLTTILEIFITGTFL. The Cytoplasmic portion of the chain corresponds to 167–379; the sequence is AKIARPKKRA…SALSVRISNV (213 aa). Residues lysine 168, arginine 171, and lysine 173 each contribute to the 1,2-dioctanoyl-sn-glycero-3-phospho-(1D-myo-inositol-4,5-bisphosphate) site. 210–217 lines the ATP pocket; sequence GCQVTGKL.

Belongs to the inward rectifier-type potassium channel (TC 1.A.2.1) family. KCNJ10 subfamily. Homotetramer. In kidney cells, it forms heteromeric channels with Kir5.1/KCNJ16; this interaction is required for KCNJ16 localization to the basolateral membrane. Interacts with MAGI1, alone and possibly as a heteromer with KCNJ16; this interaction may facilitate KCNJ10/KCNJ16 potassium channel expression at the basolateral membrane in kidney cells. Interacts with PATJ. Widely expressed in adult brain, including in the neocortex, the stratum pyrimadale of the hippocampus and the piriform cortex. Expressed by cultured astrocytes and also by cocultured cortical neurons (at protein level). In the distal segment of the nephron, expressed in the distal convoluted tubule, the connecting tubule, and the early cortical collecting duct.

It is found in the membrane. The protein resides in the basolateral cell membrane. The enzyme catalyses K(+)(in) = K(+)(out). Its activity is regulated as follows. Channel activity is strongly regulated by variations of cytosolic pH; channels are activated by alkaline and inhibited by acidic pH values. Activated by phosphatidylinositol 4,5 biphosphate (PtdIns(4,5)P2). Inhibited by Ba(2+) and Cs(+). Its function is as follows. May be responsible for potassium buffering action of glial cells in the brain. Inward rectifier potassium channels are characterized by a greater tendency to allow potassium to flow into the cell rather than out of it. Their voltage dependence is regulated by the concentration of extracellular potassium; as external potassium is raised, the voltage range of the channel opening shifts to more positive voltages. The inward rectification is mainly due to the blockage of outward current by internal magnesium. Can be blocked by extracellular barium and cesium. In the kidney, together with KCNJ16, mediates basolateral K(+) recycling in distal tubules; this process is critical for Na(+) reabsorption at the tubules. This Mus musculus (Mouse) protein is ATP-sensitive inward rectifier potassium channel 10.